We begin with the raw amino-acid sequence, 493 residues long: Glutamyl-tRNA(Gln) amidotransferase subunit A (493 aa).

Catalysis depends on charge relay system residues Lys78 and Ser158. Ser182 (acyl-ester intermediate) is an active-site residue.

Belongs to the amidase family. GatA subfamily. As to quaternary structure, heterotrimer of A, B and C subunits.

It carries out the reaction L-glutamyl-tRNA(Gln) + L-glutamine + ATP + H2O = L-glutaminyl-tRNA(Gln) + L-glutamate + ADP + phosphate + H(+). Functionally, allows the formation of correctly charged Gln-tRNA(Gln) through the transamidation of misacylated Glu-tRNA(Gln) in organisms which lack glutaminyl-tRNA synthetase. The reaction takes place in the presence of glutamine and ATP through an activated gamma-phospho-Glu-tRNA(Gln). The sequence is that of Glutamyl-tRNA(Gln) amidotransferase subunit A from Methylorubrum extorquens (strain PA1) (Methylobacterium extorquens).